A 304-amino-acid chain; its full sequence is tRNA pseudouridine synthase B (304 aa).

Asp-38 acts as the Nucleophile in catalysis.

Belongs to the pseudouridine synthase TruB family. Type 1 subfamily.

It carries out the reaction uridine(55) in tRNA = pseudouridine(55) in tRNA. In terms of biological role, responsible for synthesis of pseudouridine from uracil-55 in the psi GC loop of transfer RNAs. The chain is tRNA pseudouridine synthase B from Listeria monocytogenes serovar 1/2a (strain ATCC BAA-679 / EGD-e).